The chain runs to 122 residues: Large ribosomal subunit protein uL14 (122 aa).

It belongs to the universal ribosomal protein uL14 family. In terms of assembly, part of the 50S ribosomal subunit. Forms a cluster with proteins L3 and L19. In the 70S ribosome, L14 and L19 interact and together make contacts with the 16S rRNA in bridges B5 and B8.

In terms of biological role, binds to 23S rRNA. Forms part of two intersubunit bridges in the 70S ribosome. The sequence is that of Large ribosomal subunit protein uL14 from Chlorobium phaeobacteroides (strain BS1).